A 174-amino-acid chain; its full sequence is MNYFNLFNFTPSFDIDTGLLAERYRELQKAVHPDKFANDSEQQKLLAVQRTAQVNDGYHTLKQPLRRAEHLLSLGGVDLSHETTTIKDTVFLMQQMDWREALEDIKHSKQPQEQIDELYDSFSAHEKLLFSQLSHLLQTQDEVAYLKAADQVRKLKFMAKLQQELTNIEDALLD.

Positions 2–74 constitute a J domain; that stretch reads NYFNLFNFTP…LRRAEHLLSL (73 aa).

Belongs to the HscB family. As to quaternary structure, interacts with HscA and stimulates its ATPase activity.

Its function is as follows. Co-chaperone involved in the maturation of iron-sulfur cluster-containing proteins. Seems to help targeting proteins to be folded toward HscA. This Shewanella denitrificans (strain OS217 / ATCC BAA-1090 / DSM 15013) protein is Co-chaperone protein HscB homolog.